The sequence spans 297 residues: N-acetylneuraminate lyase (297 aa).

Residues Ser47 and Thr48 each coordinate aceneuramate. Tyr137 acts as the Proton donor in catalysis. Lys165 acts as the Schiff-base intermediate with substrate in catalysis. Residues Thr167, Gly189, Asp191, Glu192, and Ser208 each coordinate aceneuramate.

This sequence belongs to the DapA family. NanA subfamily. Homotetramer.

The protein resides in the cytoplasm. The enzyme catalyses aceneuramate = aldehydo-N-acetyl-D-mannosamine + pyruvate. It functions in the pathway amino-sugar metabolism; N-acetylneuraminate degradation; D-fructose 6-phosphate from N-acetylneuraminate: step 1/5. Catalyzes the reversible aldol cleavage of N-acetylneuraminic acid (sialic acid; Neu5Ac) to form pyruvate and N-acetylmannosamine (ManNAc) via a Schiff base intermediate. This Salmonella paratyphi A (strain AKU_12601) protein is N-acetylneuraminate lyase.